Reading from the N-terminus, the 449-residue chain is Tubulin alpha-1C chain (449 aa).

Residues 1 to 4 (MREC) carry the MREC motif motif. Gln11 provides a ligand contact to GTP. Lys40 is subject to N6-acetyllysine. Residues Glu71, Ser140, Gly144, Thr145, Thr179, Asn206, and Asn228 each contribute to the GTP site. Glu71 serves as a coordination point for Mg(2+). The active site involves Glu254. Tyr282 carries the 3'-nitrotyrosine modification. A Phosphotyrosine modification is found at Tyr432. Ser439 carries the phosphoserine modification. Tyr449 is modified (3'-nitrotyrosine).

The protein belongs to the tubulin family. In terms of assembly, dimer of alpha and beta chains. A typical microtubule is a hollow water-filled tube with an outer diameter of 25 nm and an inner diameter of 15 nM. Alpha-beta heterodimers associate head-to-tail to form protofilaments running lengthwise along the microtubule wall with the beta-tubulin subunit facing the microtubule plus end conferring a structural polarity. Microtubules usually have 13 protofilaments but different protofilament numbers can be found in some organisms and specialized cells. The cofactor is Mg(2+). Some glutamate residues at the C-terminus are polyglycylated, resulting in polyglycine chains on the gamma-carboxyl group. Glycylation is mainly limited to tubulin incorporated into axonemes (cilia and flagella) whereas glutamylation is prevalent in neuronal cells, centrioles, axonemes, and the mitotic spindle. Both modifications can coexist on the same protein on adjacent residues, and lowering polyglycylation levels increases polyglutamylation, and reciprocally. Cilia and flagella glycylation is required for their stability and maintenance. Flagella glycylation controls sperm motility. In terms of processing, some glutamate residues at the C-terminus are polyglutamylated, resulting in polyglutamate chains on the gamma-carboxyl group. Polyglutamylation plays a key role in microtubule severing by spastin (SPAST). SPAST preferentially recognizes and acts on microtubules decorated with short polyglutamate tails: severing activity by SPAST increases as the number of glutamates per tubulin rises from one to eight, but decreases beyond this glutamylation threshold. Glutamylation is also involved in cilia motility. Post-translationally, acetylation of alpha chains at Lys-40 is located inside the microtubule lumen. This modification has been correlated with increased microtubule stability, intracellular transport and ciliary assembly. Methylation of alpha chains at Lys-40 is found in mitotic microtubules and is required for normal mitosis and cytokinesis contributing to genomic stability. In terms of processing, nitration of Tyr-449 is irreversible and interferes with normal dynein intracellular distribution. Post-translationally, undergoes a tyrosination/detyrosination cycle, the cyclic removal and re-addition of a C-terminal tyrosine residue by the enzymes tubulin tyrosine carboxypeptidase (MATCAP1, VASH1 or VASH2) and tubulin tyrosine ligase (TTL), respectively. Tyrosination promotes microtubule interaction with CAP-Gly domain-containing proteins such as CLIP1, CLIP2 and DCTN1. Tyrosination regulates the initiation of dynein-dynactin motility via interaction with DCTN1, which brings the dynein-dynactin complex into contact with microtubules. In neurons, tyrosinated tubulins mediate the initiation of retrograde vesicle transport. In terms of processing, detyrosination is involved in metaphase plate congression by guiding chromosomes during mitosis: detyrosination promotes interaction with CENPE, promoting pole-proximal transport of chromosomes toward the equator. Detyrosination increases microtubules-dependent mechanotransduction in dystrophic cardiac and skeletal muscle. In cardiomyocytes, detyrosinated microtubules are required to resist to contractile compression during contraction: detyrosination promotes association with desmin (DES) at force-generating sarcomeres, leading to buckled microtubules and mechanical resistance to contraction. As to expression, minor alpha-tubulin expressed in all tissues.

The protein localises to the cytoplasm. It is found in the cytoskeleton. The catalysed reaction is GTP + H2O = GDP + phosphate + H(+). Functionally, tubulin is the major constituent of microtubules, a cylinder consisting of laterally associated linear protofilaments composed of alpha- and beta-tubulin heterodimers. Microtubules grow by the addition of GTP-tubulin dimers to the microtubule end, where a stabilizing cap forms. Below the cap, tubulin dimers are in GDP-bound state, owing to GTPase activity of alpha-tubulin. The polypeptide is Tubulin alpha-1C chain (Tuba1c) (Mus musculus (Mouse)).